A 298-amino-acid polypeptide reads, in one-letter code: MRGLDYKWIEALDAVVAQGGFERAAEELYISQSAVSQRIKQLERFLAQSVLIREQPPKPTPVGKKLLGLYRRVRILEHELIPELMNDDTAKPIQLALATNADSLATWLLPALKEVMTQRQVELNLAIYGESRSIEKLKSGEVAGAISLESQPIAGCKADYLGRMDYVCVASPDFYQRYFAAGVNYQTLRKAPAVSYDQYDDLHNRFLHDHFNISRDSIINHNVGSSEAFVRLAVSGIAYCLIPKLQIEQELASGVLMDITPGFLLSYRIYWHHWQLESGVLKEISQAIVQYAQAHLPL.

The HTH lysR-type domain maps to Leu4–Thr60. The H-T-H motif DNA-binding region spans Phe21–Lys40.

It belongs to the LysR transcriptional regulatory family. Homodimer.

Its function is as follows. Controls the transcription of genes involved in arginine and lysine metabolism. This is HTH-type transcriptional regulator ArgP from Vibrio vulnificus (strain YJ016).